The following is a 214-amino-acid chain: Alpha-S1-casein (214 aa).

The signal sequence occupies residues 1-15 (MKLLILTCLVAVALA). S27 carries the post-translational modification Phosphoserine; in allele A. S56 carries the post-translational modification Phosphoserine; in allele C. 2 positions are modified to phosphoserine: S61 and S63. Residues 69–91 (MEDAKQMKAGSSSSSEEIVPNSA) form a disordered region. S79 carries the post-translational modification Phosphoserine; in alleles A and C. S80 carries the phosphoserine modification. S81 carries the phosphoserine; in alleles A and C modification. Residue S82 is modified to Phosphoserine. Position 83 is a phosphoserine; in alleles A and C (S83). At S90 the chain carries Phosphoserine. Positions 105–111 (RYLGYLE) are opioid-like peptide sequence. A Phosphoserine modification is found at S130.

It belongs to the alpha-casein family. Mammary gland specific. Secreted in milk.

Its subcellular location is the secreted. Important role in the capacity of milk to transport calcium phosphate. The chain is Alpha-S1-casein (CSN1S1) from Ovis aries (Sheep).